The chain runs to 358 residues: DNA polymerase IV (358 aa).

A UmuC domain is found at 4 to 185; the sequence is IIHIDMDCYF…LSLRKIPGVG (182 aa). Mg(2+) contacts are provided by aspartate 8 and aspartate 103. The active site involves glutamate 104.

It belongs to the DNA polymerase type-Y family. In terms of assembly, monomer. Mg(2+) serves as cofactor.

The protein resides in the cytoplasm. It catalyses the reaction DNA(n) + a 2'-deoxyribonucleoside 5'-triphosphate = DNA(n+1) + diphosphate. Functionally, poorly processive, error-prone DNA polymerase involved in untargeted mutagenesis. Copies undamaged DNA at stalled replication forks, which arise in vivo from mismatched or misaligned primer ends. These misaligned primers can be extended by PolIV. Exhibits no 3'-5' exonuclease (proofreading) activity. May be involved in translesional synthesis, in conjunction with the beta clamp from PolIII. This chain is DNA polymerase IV, found in Shewanella baltica (strain OS195).